We begin with the raw amino-acid sequence, 332 residues long: Endo-1,4-beta-xylanase B (332 aa).

The 330-residue stretch at 2–331 (STEIPSLSAS…KDSFWRIIGQ (330 aa)) folds into the GH10 domain. Residue Glu-134 is the Proton donor of the active site. The active-site Nucleophile is Glu-241.

This sequence belongs to the glycosyl hydrolase 10 (cellulase F) family. Cytoplasmic xylanase subfamily.

It is found in the cytoplasm. The enzyme catalyses Endohydrolysis of (1-&gt;4)-beta-D-xylosidic linkages in xylans.. It functions in the pathway glycan degradation; xylan degradation. Completely inhibited by Ag(2+), Cu(2+), Hg(2+), Mn(2+), Pb(2+) and Sn(2+). Strongly inhibited by Fe(2+) and Zn(2+). Co(2+) and Ni(2+) cause little inhibition while Ca(2+) and Mg(2+) do not affect enzyme activity, and Ba(2+) produces a small stimulating effect. Irreversibly inactivated by SDS in vitro. Its function is as follows. Plays a role in plant xylan biodegradation, probably via the hydrolysis of short xylooligosaccharides resulting from extracellular xylan hydrolysis, once they have been transported inside cells. Shows similar activity on xylans of different rate of arabinose or methylglucuronic substitution. Also displays high activity on aryl-xylosides. Is active on xylotetraose and xylotriose, but does not hydrolyze xylobiose, indicating that XynB is a xylanase and not a beta-xylosidase. The protein is Endo-1,4-beta-xylanase B (xynB) of Paenibacillus barcinonensis.